The chain runs to 298 residues: Tyrosine recombinase XerD (298 aa).

A Core-binding (CB) domain is found at 3-88 (SSHNNLLQNF…AIRQFYKFLK (86 aa)). The Tyr recombinase domain maps to 109–292 (SIPDYLTQDE…ANKTLREVHK (184 aa)). Active-site residues include Arg149, Lys173, His244, Arg247, and His270. Residue Tyr279 is the O-(3'-phospho-DNA)-tyrosine intermediate of the active site.

It belongs to the 'phage' integrase family. XerD subfamily. In terms of assembly, forms a cyclic heterotetrameric complex composed of two molecules of XerC and two molecules of XerD.

The protein resides in the cytoplasm. In terms of biological role, site-specific tyrosine recombinase, which acts by catalyzing the cutting and rejoining of the recombining DNA molecules. The XerC-XerD complex is essential to convert dimers of the bacterial chromosome into monomers to permit their segregation at cell division. It also contributes to the segregational stability of plasmids. This Leptospira interrogans serogroup Icterohaemorrhagiae serovar copenhageni (strain Fiocruz L1-130) protein is Tyrosine recombinase XerD.